A 45-amino-acid polypeptide reads, in one-letter code: Photosystem II reaction center protein K (45 aa).

A propeptide spanning residues 1-8 (MELMLLFA) is cleaved from the precursor. The chain crosses the membrane as a helical span at residues 24–44 (LPVIPVLFLALAFVWQASVGF).

It belongs to the PsbK family. In terms of assembly, PSII is composed of 1 copy each of membrane proteins PsbA, PsbB, PsbC, PsbD, PsbE, PsbF, PsbH, PsbI, PsbJ, PsbK, PsbL, PsbM, PsbT, PsbX, PsbY, PsbZ, Psb30/Ycf12, peripheral proteins PsbO, CyanoQ (PsbQ), PsbU, PsbV and a large number of cofactors. It forms dimeric complexes.

Its subcellular location is the cellular thylakoid membrane. Functionally, one of the components of the core complex of photosystem II (PSII). PSII is a light-driven water:plastoquinone oxidoreductase that uses light energy to abstract electrons from H(2)O, generating O(2) and a proton gradient subsequently used for ATP formation. It consists of a core antenna complex that captures photons, and an electron transfer chain that converts photonic excitation into a charge separation. This Cyanothece sp. (strain PCC 7425 / ATCC 29141) protein is Photosystem II reaction center protein K.